We begin with the raw amino-acid sequence, 88 residues long: Co-chaperonin GroES (88 aa).

Belongs to the GroES chaperonin family. As to quaternary structure, heptamer of 7 subunits arranged in a ring. Interacts with the chaperonin GroEL.

It is found in the cytoplasm. Functionally, together with the chaperonin GroEL, plays an essential role in assisting protein folding. The GroEL-GroES system forms a nano-cage that allows encapsulation of the non-native substrate proteins and provides a physical environment optimized to promote and accelerate protein folding. GroES binds to the apical surface of the GroEL ring, thereby capping the opening of the GroEL channel. The polypeptide is Co-chaperonin GroES (Treponema denticola (strain ATCC 35405 / DSM 14222 / CIP 103919 / JCM 8153 / KCTC 15104)).